Reading from the N-terminus, the 498-residue chain is ATP synthase subunit beta, chloroplastic (498 aa).

172-179 (GGAGVGKT) is an ATP binding site.

Belongs to the ATPase alpha/beta chains family. In terms of assembly, F-type ATPases have 2 components, CF(1) - the catalytic core - and CF(0) - the membrane proton channel. CF(1) has five subunits: alpha(3), beta(3), gamma(1), delta(1), epsilon(1). CF(0) has four main subunits: a(1), b(1), b'(1) and c(9-12).

It is found in the plastid. The protein resides in the chloroplast thylakoid membrane. It catalyses the reaction ATP + H2O + 4 H(+)(in) = ADP + phosphate + 5 H(+)(out). In terms of biological role, produces ATP from ADP in the presence of a proton gradient across the membrane. The catalytic sites are hosted primarily by the beta subunits. This is ATP synthase subunit beta, chloroplastic from Citrus sinensis (Sweet orange).